A 655-amino-acid chain; its full sequence is Ubiquilin-3 (655 aa).

In terms of domain architecture, Ubiquitin-like spans 22–98; sequence IKVTVKTPKD…LVIKRQHRAM (77 aa). Residues 102-124 are disordered; that stretch reads CPAASVPTQGPSPGSLPQPSSIY. A compositionally biased stretch (low complexity) spans 110 to 122; that stretch reads QGPSPGSLPQPSS. One can recognise an STI1 domain in the interval 194–233; it reads NPHMQQLIQHNPEIGHILNNPEIMRQTLEFLRNPAMMQEM. Disordered stretches follow at residues 277-330, 364-399, and 412-447; these read PFAT…PDIR, ASAL…LPEE, and FLRY…LVSG. A compositionally biased stretch (low complexity) spans 279–290; the sequence is ATATTDNATTTT. Positions 318-330 are enriched in basic and acidic residues; it reads GRQDGDQDAPDIR. The span at 377 to 395 shows a compositional bias: low complexity; the sequence is VNRVPPSSPSSQEPGSGQP. Residues 432–441 are compositionally biased toward polar residues; that stretch reads KSSTGHSTNL. Positions 609–655 constitute a UBA domain; the sequence is QLQPEAHFQVQLEQLRSMGFLNREANLQALIATGGDVDAAVEKLRQS.

In terms of tissue distribution, testis specific.

The protein is Ubiquilin-3 (UBQLN3) of Homo sapiens (Human).